The sequence spans 134 residues: Waprin-Phi1 (134 aa).

The signal sequence occupies residues 1–23 (MTLRRGSCPLLLFSLVGLLTTCA). WAP domains are found at residues 36-82 (VAEK…SCQI) and 83-133 (PDEK…TTAR). Disulfide bonds link Cys43/Cys72, Cys55/Cys76, Cys59/Cys71, Cys65/Cys80, Cys90/Cys120, Cys103/Cys124, Cys107/Cys119, and Cys113/Cys129.

This sequence belongs to the venom waprin family. In terms of tissue distribution, expressed by the venom gland.

It is found in the secreted. Functionally, damages membranes of susceptible bacteria. Has no hemolytic activity. Not toxic to mice. Does not inhibit the proteinases elastase and cathepsin G. The protein is Waprin-Phi1 of Philodryas olfersii (Green snake).